Consider the following 344-residue polypeptide: Holliday junction branch migration complex subunit RuvB (344 aa).

Positions 1-183 (MPDRELISGD…FGLVLRLDPY (183 aa)) are large ATPase domain (RuvB-L). ATP contacts are provided by residues L22, R23, G64, K67, T68, T69, 130–132 (EDF), R173, Y183, and R220. Residue T68 coordinates Mg(2+). The interval 184–254 (NTEELKAIVK…VAQTALNLLD (71 aa)) is small ATPAse domain (RuvB-S). A head domain (RuvB-H) region spans residues 257–344 (RYGLDEIDQK…EGDHPSLFEA (88 aa)). DNA is bound by residues R312 and R317.

Belongs to the RuvB family. Homohexamer. Forms an RuvA(8)-RuvB(12)-Holliday junction (HJ) complex. HJ DNA is sandwiched between 2 RuvA tetramers; dsDNA enters through RuvA and exits via RuvB. An RuvB hexamer assembles on each DNA strand where it exits the tetramer. Each RuvB hexamer is contacted by two RuvA subunits (via domain III) on 2 adjacent RuvB subunits; this complex drives branch migration. In the full resolvosome a probable DNA-RuvA(4)-RuvB(12)-RuvC(2) complex forms which resolves the HJ.

The protein resides in the cytoplasm. The catalysed reaction is ATP + H2O = ADP + phosphate + H(+). In terms of biological role, the RuvA-RuvB-RuvC complex processes Holliday junction (HJ) DNA during genetic recombination and DNA repair, while the RuvA-RuvB complex plays an important role in the rescue of blocked DNA replication forks via replication fork reversal (RFR). RuvA specifically binds to HJ cruciform DNA, conferring on it an open structure. The RuvB hexamer acts as an ATP-dependent pump, pulling dsDNA into and through the RuvAB complex. RuvB forms 2 homohexamers on either side of HJ DNA bound by 1 or 2 RuvA tetramers; 4 subunits per hexamer contact DNA at a time. Coordinated motions by a converter formed by DNA-disengaged RuvB subunits stimulates ATP hydrolysis and nucleotide exchange. Immobilization of the converter enables RuvB to convert the ATP-contained energy into a lever motion, pulling 2 nucleotides of DNA out of the RuvA tetramer per ATP hydrolyzed, thus driving DNA branch migration. The RuvB motors rotate together with the DNA substrate, which together with the progressing nucleotide cycle form the mechanistic basis for DNA recombination by continuous HJ branch migration. Branch migration allows RuvC to scan DNA until it finds its consensus sequence, where it cleaves and resolves cruciform DNA. In Solibacter usitatus (strain Ellin6076), this protein is Holliday junction branch migration complex subunit RuvB.